Reading from the N-terminus, the 326-residue chain is tRNA-dihydrouridine(20a/20b) synthase [NAD(P)+] (326 aa).

Residues 26–28 and Q79 each bind FMN; that span reads PMV. The active-site Proton donor is the C108. FMN contacts are provided by residues K149, H177, 208-210, and 232-233; these read NGD and AR.

The protein belongs to the Dus family. Dus4 subfamily. It depends on FMN as a cofactor.

It localises to the mitochondrion. The catalysed reaction is 5,6-dihydrouridine(20a) in tRNA + NADP(+) = uridine(20a) in tRNA + NADPH + H(+). It carries out the reaction 5,6-dihydrouridine(20a) in tRNA + NAD(+) = uridine(20a) in tRNA + NADH + H(+). The enzyme catalyses 5,6-dihydrouridine(20b) in tRNA + NAD(+) = uridine(20b) in tRNA + NADH + H(+). It catalyses the reaction 5,6-dihydrouridine(20b) in tRNA + NADP(+) = uridine(20b) in tRNA + NADPH + H(+). The catalysed reaction is a 5,6-dihydrouridine in mRNA + NAD(+) = a uridine in mRNA + NADH + H(+). It carries out the reaction a 5,6-dihydrouridine in mRNA + NADP(+) = a uridine in mRNA + NADPH + H(+). Its function is as follows. Catalyzes the synthesis of dihydrouridine, a modified base found in the D-loop of most tRNAs. Also able to mediate dihydrouridylation of some mRNAs, thereby affecting their translation. In Schizosaccharomyces pombe (strain 972 / ATCC 24843) (Fission yeast), this protein is tRNA-dihydrouridine(20a/20b) synthase [NAD(P)+].